We begin with the raw amino-acid sequence, 380 residues long: Glucose-1-phosphate adenylyltransferase (380 aa).

Residues G164, 179–180 (EK), and S190 contribute to the alpha-D-glucose 1-phosphate site.

It belongs to the bacterial/plant glucose-1-phosphate adenylyltransferase family. As to quaternary structure, homotetramer.

It carries out the reaction alpha-D-glucose 1-phosphate + ATP + H(+) = ADP-alpha-D-glucose + diphosphate. Its pathway is glycan biosynthesis; glycogen biosynthesis. Its function is as follows. Involved in the biosynthesis of ADP-glucose, a building block required for the elongation reactions to produce glycogen. Catalyzes the reaction between ATP and alpha-D-glucose 1-phosphate (G1P) to produce pyrophosphate and ADP-Glc. The chain is Glucose-1-phosphate adenylyltransferase from Lactococcus lactis subsp. cremoris (strain SK11).